A 453-amino-acid polypeptide reads, in one-letter code: tRNA modification GTPase MnmE (453 aa).

Residues arginine 22, glutamate 79, and lysine 119 each coordinate (6S)-5-formyl-5,6,7,8-tetrahydrofolate. Positions 215–376 constitute a TrmE-type G domain; it reads GMKVVIAGRP…LQQHLKSLMG (162 aa). Asparagine 225 contributes to the K(+) binding site. GTP contacts are provided by residues 225–230, 244–250, 269–272, and 334–337; these read NAGKSS, TEIAGTT, DTAG, and NKAD. Mg(2+) is bound at residue serine 229. K(+) is bound by residues threonine 244, isoleucine 246, and threonine 249. Residue threonine 250 participates in Mg(2+) binding. Residue lysine 453 coordinates (6S)-5-formyl-5,6,7,8-tetrahydrofolate.

Belongs to the TRAFAC class TrmE-Era-EngA-EngB-Septin-like GTPase superfamily. TrmE GTPase family. As to quaternary structure, homodimer. Heterotetramer of two MnmE and two MnmG subunits. K(+) serves as cofactor.

Its subcellular location is the cytoplasm. Functionally, exhibits a very high intrinsic GTPase hydrolysis rate. Involved in the addition of a carboxymethylaminomethyl (cmnm) group at the wobble position (U34) of certain tRNAs, forming tRNA-cmnm(5)s(2)U34. The sequence is that of tRNA modification GTPase MnmE from Shewanella sediminis (strain HAW-EB3).